Consider the following 759-residue polypeptide: Serine/threonine-protein kinase HRK1 (759 aa).

The tract at residues 1-32 (MPNLLSRNPFHGHHNDHHHDRENSSNNPPQLI) is disordered. S37 carries the post-translational modification Phosphoserine. The disordered stretch occupies residues 45–162 (KQSNDSLRSE…PPPSKSTSTV (118 aa)). The segment covering 59-97 (SMKSTTTTTNYTTTNLNNNTHSHSNATSISTNNYNNNYE) has biased composition (low complexity). Positions 113 to 122 (SPASPKQTHS) are enriched in polar residues. A Protein kinase domain is found at 215–722 (GKLGKLLGSG…LDDIFNDEWF (508 aa)). ATP is bound by residues 221–229 (LGSGAGGSV) and K244. D340 serves as the catalytic Proton acceptor. Residues S382 and S472 each carry the phosphoserine modification. The span at 493-502 (PNTPASIQGK) shows a compositional bias: polar residues. 2 disordered regions span residues 493 to 578 (PNTP…GRVD) and 614 to 682 (AANA…KIIH). Phosphothreonine is present on T495. S498 carries the post-translational modification Phosphoserine. Over residues 510–519 (VEEETEENKE) the composition is skewed to acidic residues. Over residues 520–547 (DDSNNDKESTPDNDKESTIDIKISKNEN) the composition is skewed to basic and acidic residues. Low complexity predominate over residues 614–646 (AANANPDMVPQNNPQQQQQQQQQQQQQQQQQQQ). A compositionally biased stretch (polar residues) spans 663–672 (ASDNKSSQQH).

The protein belongs to the protein kinase superfamily. Ser/Thr protein kinase family.

It is found in the cytoplasm. The enzyme catalyses L-seryl-[protein] + ATP = O-phospho-L-seryl-[protein] + ADP + H(+). It carries out the reaction L-threonyl-[protein] + ATP = O-phospho-L-threonyl-[protein] + ADP + H(+). In terms of biological role, involved in regulating the activity of the plasma membrane proton pump PMA1. The chain is Serine/threonine-protein kinase HRK1 (HRK1) from Saccharomyces cerevisiae (strain ATCC 204508 / S288c) (Baker's yeast).